A 274-amino-acid chain; its full sequence is MEVFMYQINALNPKEEGHKARKRFGQNFLHDQRVIAKIVRSVNPRPGDNVVEIGPGLAALTSPLIGECDALTVVELDRDLAAGLPDRVPHPERLTIVEADALKYDFSQLATQESPLRVVGNLPYNISTPLLFHLLEFGDKVKDMHFMLQKEVVDRITAEPNTKEYGRLSVMIQYFCQPTFLFEVPAGAFNPPPKVTSAVFRLVPYKEKPIVAKDEKALSRLVGHVFTQRRKTLRNSLKGMLADDAFDKAGIDPMARPETLTLAQFVALSDQMVP.

Positions 27, 29, 54, 75, 100, and 121 each coordinate S-adenosyl-L-methionine.

The protein belongs to the class I-like SAM-binding methyltransferase superfamily. rRNA adenine N(6)-methyltransferase family. RsmA subfamily.

The protein resides in the cytoplasm. The enzyme catalyses adenosine(1518)/adenosine(1519) in 16S rRNA + 4 S-adenosyl-L-methionine = N(6)-dimethyladenosine(1518)/N(6)-dimethyladenosine(1519) in 16S rRNA + 4 S-adenosyl-L-homocysteine + 4 H(+). Specifically dimethylates two adjacent adenosines (A1518 and A1519) in the loop of a conserved hairpin near the 3'-end of 16S rRNA in the 30S particle. May play a critical role in biogenesis of 30S subunits. This is Ribosomal RNA small subunit methyltransferase A from Acinetobacter baylyi (strain ATCC 33305 / BD413 / ADP1).